A 161-amino-acid chain; its full sequence is MORN repeat-containing protein 5 (161 aa).

MORN repeat units follow at residues 8 to 30 (YIGEYVDGRMEGKAKYILPTETI), 31 to 53 (YVGEMKDGMFHGEGTLYFPSGSQ), and 54 to 75 (YDAIWENGLAIKGTYTFSDGLH).

As to expression, expressed in sperm (at protein level).

The protein localises to the cell projection. It localises to the cilium. Its subcellular location is the flagellum. The sequence is that of MORN repeat-containing protein 5 (MORN5) from Homo sapiens (Human).